The chain runs to 294 residues: RNA exonuclease 4 (294 aa).

Over residues methionine 1–serine 13 the composition is skewed to polar residues. The disordered stretch occupies residues methionine 1–serine 56. Basic residues predominate over residues lysine 23–serine 38. The Exonuclease domain occupies tyrosine 119 to tyrosine 271.

It belongs to the REXO4 family.

Its subcellular location is the nucleus. Its function is as follows. Exoribonuclease involved in ribosome biosynthesis. Involved in the processing of ITS1, the internal transcribed spacer localized between the 18S and 5.8S rRNAs. The chain is RNA exonuclease 4 (REX4) from Kluyveromyces lactis (strain ATCC 8585 / CBS 2359 / DSM 70799 / NBRC 1267 / NRRL Y-1140 / WM37) (Yeast).